Here is a 377-residue protein sequence, read N- to C-terminus: 23S rRNA (uracil(747)-C(5))-methyltransferase RlmC (377 aa).

4 residues coordinate [4Fe-4S] cluster: C3, C11, C14, and C87. Q212, F241, E262, and N307 together coordinate S-adenosyl-L-methionine. The active-site Nucleophile is C334.

Belongs to the class I-like SAM-binding methyltransferase superfamily. RNA M5U methyltransferase family. RlmC subfamily.

The enzyme catalyses uridine(747) in 23S rRNA + S-adenosyl-L-methionine = 5-methyluridine(747) in 23S rRNA + S-adenosyl-L-homocysteine + H(+). Its function is as follows. Catalyzes the formation of 5-methyl-uridine at position 747 (m5U747) in 23S rRNA. In Edwardsiella ictaluri (strain 93-146), this protein is 23S rRNA (uracil(747)-C(5))-methyltransferase RlmC.